Here is a 411-residue protein sequence, read N- to C-terminus: Bifunctional protein GlmU (411 aa).

A pyrophosphorylase region spans residues 1–204 (MDAIILCAGK…NGKLHGVELK (204 aa)). UTP contacts are provided by residues 6 to 9 (LCAG), glutamine 74, and glycine 79. Positions 80, 130, 142, and 158 each coordinate N-acetyl-alpha-D-glucosamine 1-phosphate. The tract at residues 205 to 224 (GYWNDIGHPWDVLSANNHFL) is linker. The interval 225-411 (NKIISKVSGK…DELVITKKRN (187 aa)) is N-acetyltransferase. The Proton acceptor role is filled by histidine 308. Acetyl-CoA contacts are provided by alanine 384 and lysine 401.

The protein in the N-terminal section; belongs to the N-acetylglucosamine-1-phosphate uridyltransferase family. In the C-terminal section; belongs to the transferase hexapeptide repeat family.

It carries out the reaction N-acetyl-alpha-D-glucosamine 1-phosphate + UTP + H(+) = UDP-N-acetyl-alpha-D-glucosamine + diphosphate. The enzyme catalyses alpha-D-glucosamine 1-phosphate + acetyl-CoA = N-acetyl-alpha-D-glucosamine 1-phosphate + CoA + H(+). It functions in the pathway nucleotide-sugar biosynthesis; UDP-N-acetyl-alpha-D-glucosamine biosynthesis; N-acetyl-alpha-D-glucosamine 1-phosphate from alpha-D-glucosamine 6-phosphate (route II): step 2/2. The protein operates within nucleotide-sugar biosynthesis; UDP-N-acetyl-alpha-D-glucosamine biosynthesis; UDP-N-acetyl-alpha-D-glucosamine from N-acetyl-alpha-D-glucosamine 1-phosphate: step 1/1. Its function is as follows. Catalyzes the last two sequential reactions in the de novo biosynthetic pathway for UDP-N-acetyl-glucosamine (UDP-GlcNAc). Responsible for the acetylation of GlcN-1-P to GlcNAc-1-P, and for the uridyl transfer from UTP to GlcNAc-1-P, to produce UDP-GlcNAc and pyrophosphate. The protein is Bifunctional protein GlmU of Methanococcus maripaludis (strain DSM 14266 / JCM 13030 / NBRC 101832 / S2 / LL).